The chain runs to 465 residues: Mothers against decapentaplegic homolog 5 (465 aa).

Thr-2 is subject to N-acetylthreonine. Positions 13 to 137 (PAVKRLLGWK…YKRVESPVLP (125 aa)) constitute an MH1 domain. Cys-65, Cys-110, Cys-122, and His-127 together coordinate Zn(2+). The segment at 163–243 (NEPHMPQNAT…GQDNSQPMDT (81 aa)) is disordered. Positions 169–182 (QNATFPDSFHQPNS) are enriched in polar residues. A compositionally biased stretch (pro residues) spans 186 to 197 (PLSPNSPYPPSP). Low complexity predominate over residues 198–214 (ASSTYPNSPASSGPGSP). The span at 234–243 (GQDNSQPMDT) shows a compositional bias: polar residues. Residues 271 to 465 (WCSIVYYELN…SPLNPISSVS (195 aa)) form the MH2 domain. A phosphoserine mark is found at Ser-463 and Ser-465.

Belongs to the dwarfin/SMAD family. In terms of assembly, homodimer. Forms trimers with the co-SMAD SMAD4. Interacts with PEBP2-alpha subunit and SMURF1. Interacts with SUV39H1 and SUV39H2. Interacts (via MH2 domain) with LEMD3. Interacts with WWP1. Interacts with TMEM119. Interacts with ZNF8. Interacts with RANBP3L. Interacts with HK1. Interacts with HGS; this interaction attenuates BMP signaling. Phosphorylated on serine by BMP (bone morphogenetic proteins) type 1 receptor kinase. In terms of processing, ubiquitin-mediated proteolysis by SMAD-specific E3 ubiquitin ligase SMURF1.

The protein resides in the cytoplasm. Its subcellular location is the nucleus. It localises to the mitochondrion. Transcriptional regulator that plays a role in various cellular processes including embryonic development, cell differentiation, angiogenesis and tissue homeostasis. Upon BMP ligand binding to their receptors at the cell surface, is phosphorylated by activated type I BMP receptors (BMPRIs) and associates with SMAD4 to form a heteromeric complex which translocates into the nucleus acting as transcription factor. In turn, the hetero-trimeric complex recognizes cis-regulatory elements containing Smad Binding Elements (SBEs) to modulate the outcome of the signaling network. Non-phosphorylated SMAD5 has a cytoplasmic role in energy metabolism regulation by promoting mitochondrial respiration and glycolysis in response to cytoplasmic pH changes. Mechanistically, interacts with hexokinase 1/HK1 and thereby accelerates glycolysis. This is Mothers against decapentaplegic homolog 5 (Smad5) from Rattus norvegicus (Rat).